The chain runs to 200 residues: Pyridoxal 5'-phosphate synthase subunit PdxT (200 aa).

52–54 (GES) is a binding site for L-glutamine. Residue cysteine 84 is the Nucleophile of the active site. L-glutamine is bound by residues arginine 115 and 143–144 (IR). Active-site charge relay system residues include histidine 179 and glutamate 181.

This sequence belongs to the glutaminase PdxT/SNO family. In terms of assembly, in the presence of PdxS, forms a dodecamer of heterodimers. Only shows activity in the heterodimer.

The enzyme catalyses aldehydo-D-ribose 5-phosphate + D-glyceraldehyde 3-phosphate + L-glutamine = pyridoxal 5'-phosphate + L-glutamate + phosphate + 3 H2O + H(+). The catalysed reaction is L-glutamine + H2O = L-glutamate + NH4(+). It participates in cofactor biosynthesis; pyridoxal 5'-phosphate biosynthesis. Functionally, catalyzes the hydrolysis of glutamine to glutamate and ammonia as part of the biosynthesis of pyridoxal 5'-phosphate. The resulting ammonia molecule is channeled to the active site of PdxS. The sequence is that of Pyridoxal 5'-phosphate synthase subunit PdxT from Methanosarcina barkeri (strain Fusaro / DSM 804).